The sequence spans 258 residues: MLAKRIIPCLDVRDGQVVKGVQFRNHEIIGDIVPLAKRYAEEGADELVFYDITASSDGRVVDKSWVSRVAEVIDIPFCVAGGIKSLEDAAKILSFGADKISINSPALADPTLITRLADRFGVQCIVVGIDTWYDAETGKYHVNQYTGDESRTRVTQWETLDWVQEVQKRGAGEIVLNMMNQDGVRNGYDLEQLKKVREVCHVPLIASGGAGTMEHFLEAFRDADVDGALAASVFHKQIINISELKTYLATQGVEIRIC.

Catalysis depends on residues aspartate 11 and aspartate 130.

Belongs to the HisA/HisF family. In terms of assembly, heterodimer of HisH and HisF.

It localises to the cytoplasm. The catalysed reaction is 5-[(5-phospho-1-deoxy-D-ribulos-1-ylimino)methylamino]-1-(5-phospho-beta-D-ribosyl)imidazole-4-carboxamide + L-glutamine = D-erythro-1-(imidazol-4-yl)glycerol 3-phosphate + 5-amino-1-(5-phospho-beta-D-ribosyl)imidazole-4-carboxamide + L-glutamate + H(+). It participates in amino-acid biosynthesis; L-histidine biosynthesis; L-histidine from 5-phospho-alpha-D-ribose 1-diphosphate: step 5/9. In terms of biological role, IGPS catalyzes the conversion of PRFAR and glutamine to IGP, AICAR and glutamate. The HisF subunit catalyzes the cyclization activity that produces IGP and AICAR from PRFAR using the ammonia provided by the HisH subunit. This Escherichia coli O7:K1 (strain IAI39 / ExPEC) protein is Imidazole glycerol phosphate synthase subunit HisF.